Reading from the N-terminus, the 829-residue chain is Probable beta-glucosidase H (829 aa).

N13 is a glycosylation site (N-linked (GlcNAc...) asparagine). Residue D225 is part of the active site. 6 N-linked (GlcNAc...) asparagine glycosylation sites follow: N304, N473, N602, N627, N664, and N749. The PA14 domain occupies 389-548 (RMLSNAVIHF…DPEQMVANAV (160 aa)).

This sequence belongs to the glycosyl hydrolase 3 family.

It is found in the secreted. It carries out the reaction Hydrolysis of terminal, non-reducing beta-D-glucosyl residues with release of beta-D-glucose.. It functions in the pathway glycan metabolism; cellulose degradation. Beta-glucosidases are one of a number of cellulolytic enzymes involved in the degradation of cellulosic biomass. Catalyzes the last step releasing glucose from the inhibitory cellobiose. This Aspergillus fumigatus (strain CBS 144.89 / FGSC A1163 / CEA10) (Neosartorya fumigata) protein is Probable beta-glucosidase H (bglH).